We begin with the raw amino-acid sequence, 1026 residues long: Multidrug resistance protein MdtC (1026 aa).

Transmembrane regions (helical) follow at residues 12 to 34 (VATL…LLPV), 336 to 353 (QSLI…FLFL), 360 to 382 (AIPA…LCGF), 431 to 450 (VGFT…LPLL), 463 to 485 (FAVT…TPML), 525 to 547 (HARW…YISI), 853 to 875 (LLLI…ESYV), 895 to 917 (LEWF…IGIV), 948 to 970 (LLRF…PLVL), and 985 to 1007 (TIVG…VYLF).

It belongs to the resistance-nodulation-cell division (RND) (TC 2.A.6) family. MdtC subfamily. In terms of assembly, part of a tripartite efflux system composed of MdtA, MdtB and MdtC. MdtC forms a heteromultimer with MdtB.

It is found in the cell inner membrane. This Pectobacterium atrosepticum (strain SCRI 1043 / ATCC BAA-672) (Erwinia carotovora subsp. atroseptica) protein is Multidrug resistance protein MdtC.